The primary structure comprises 164 residues: Endoribonuclease YbeY (164 aa).

Zn(2+) is bound by residues His117, His121, and His127.

This sequence belongs to the endoribonuclease YbeY family. Zn(2+) is required as a cofactor.

It is found in the cytoplasm. In terms of biological role, single strand-specific metallo-endoribonuclease involved in late-stage 70S ribosome quality control and in maturation of the 3' terminus of the 16S rRNA. This is Endoribonuclease YbeY from Mycoplasma mycoides subsp. mycoides SC (strain CCUG 32753 / NCTC 10114 / PG1).